The chain runs to 632 residues: tRNA uridine 5-carboxymethylaminomethyl modification enzyme MnmG (632 aa).

Residues 13 to 18 (GGGHAG), V125, and S180 contribute to the FAD site. 273–287 (GPRYCPSIEDKVMRF) lines the NAD(+) pocket. Position 370 (Q370) interacts with FAD.

This sequence belongs to the MnmG family. In terms of assembly, homodimer. Heterotetramer of two MnmE and two MnmG subunits. Requires FAD as cofactor.

The protein resides in the cytoplasm. Functionally, NAD-binding protein involved in the addition of a carboxymethylaminomethyl (cmnm) group at the wobble position (U34) of certain tRNAs, forming tRNA-cmnm(5)s(2)U34. The polypeptide is tRNA uridine 5-carboxymethylaminomethyl modification enzyme MnmG (Vibrio vulnificus (strain YJ016)).